The primary structure comprises 254 residues: Pimeloyl-[acyl-carrier protein] methyl ester esterase (254 aa).

The AB hydrolase-1 domain maps to 14–242 (LVLLHGWGMN…ASHAPFISHP (229 aa)). Substrate contacts are provided by residues Trp-20, 82–83 (SL), and 143–147 (FLAIQ). Ser-82 (nucleophile) is an active-site residue. Active-site residues include Asp-207 and His-235. His-235 serves as a coordination point for substrate.

It belongs to the AB hydrolase superfamily. Carboxylesterase BioH family. In terms of assembly, monomer.

It localises to the cytoplasm. It catalyses the reaction 6-carboxyhexanoyl-[ACP] methyl ester + H2O = 6-carboxyhexanoyl-[ACP] + methanol + H(+). It functions in the pathway cofactor biosynthesis; biotin biosynthesis. In terms of biological role, the physiological role of BioH is to remove the methyl group introduced by BioC when the pimeloyl moiety is complete. It allows to synthesize pimeloyl-ACP via the fatty acid synthetic pathway through the hydrolysis of the ester bonds of pimeloyl-ACP esters. This chain is Pimeloyl-[acyl-carrier protein] methyl ester esterase, found in Aeromonas salmonicida (strain A449).